The following is a 44-amino-acid chain: Photosystem I reaction center subunit IX (44 aa).

The helical transmembrane segment at 9–29 (WFRSAPVVATIWIVLTAGILV) threads the bilayer.

Belongs to the PsaJ family.

Its subcellular location is the cellular thylakoid membrane. In terms of biological role, may help in the organization of the PsaE and PsaF subunits. The polypeptide is Photosystem I reaction center subunit IX (Prochlorococcus marinus (strain MIT 9211)).